We begin with the raw amino-acid sequence, 189 residues long: Marginal zone B- and B1-cell-specific protein (189 aa).

A signal peptide spans 1–16 (MRLSLLLLLPLLGAWA). Intrachain disulfides connect C50–C178, C53–C171, and C95–C143. The short motif at 186 to 189 (RTEL) is the Prevents secretion from ER element.

It belongs to the MZB1 family. Part of the ER chaperone complex, a multi-protein complex in the endoplasmic reticulum containing a large number of molecular chaperones which associates with unassembled incompletely folded immunoglobulin heavy chains. Interacts with HSP90B1 and PDIA3 in a calcium-dependent manner. In terms of processing, forms an interchain disulfide bond with IgM monomers.

Its subcellular location is the endoplasmic reticulum lumen. It is found in the secreted. Functionally, associates with immunoglobulin M (IgM) heavy and light chains and promotes IgM assembly and secretion. May exert its effect by acting as a molecular chaperone or as an oxidoreductase as it displays a low level of oxidoreductase activity. Helps to diversify peripheral B-cell functions by regulating Ca(2+) stores, antibody secretion, and integrin activation. In terms of biological role, acts as a hormone-regulated adipokine/pro-inflammatory cytokine that is implicated in causing chronic inflammation, affecting cellular expansion and blunting insulin response in adipocytes. May have a role in the onset of insulin resistance. The polypeptide is Marginal zone B- and B1-cell-specific protein (MZB1) (Bos taurus (Bovine)).